Reading from the N-terminus, the 350-residue chain is Leucine-rich repeat-containing protein 58 (350 aa).

10 LRR repeats span residues 14 to 34 (NLTH…NKRK), 35 to 56 (DVQQ…VASF), 58 to 80 (HLHL…LGLT), 81 to 102 (KLKT…KEMG), 105 to 125 (RLEV…QFLQ), 128 to 149 (TLKS…IENL), 151 to 173 (SLEF…ANLP), 174 to 195 (YLSY…LAQV), 197 to 218 (SLRS…ILSL), and 220 to 240 (HLHE…RDLT).

The polypeptide is Leucine-rich repeat-containing protein 58 (lrrc58) (Xenopus laevis (African clawed frog)).